The following is a 531-amino-acid chain: Transcription termination/antitermination protein NusA (531 aa).

The S1 motif domain maps to 165–235 (GEVIEAKVED…SLWPITLSRS (71 aa)). The region spanning 340-410 (DTSIEVVVPA…FGIKKRREKI (71 aa)) is the KH domain. Residues 463 to 475 (EKQVTPKEKEKVQ) are compositionally biased toward basic and acidic residues. The tract at residues 463 to 531 (EKQVTPKEKE…KQTFDSFDDL (69 aa)) is disordered. The span at 476-490 (PKAKVHSNSHSKKPA) shows a compositional bias: basic residues. Basic and acidic residues predominate over residues 502-512 (ASDKNLKKDQV). Residues 513–531 (DNNQTNPQTKQTFDSFDDL) show a composition bias toward polar residues.

It belongs to the NusA family. Monomer. Binds directly to the core enzyme of the DNA-dependent RNA polymerase and to nascent RNA.

Its subcellular location is the cytoplasm. In terms of biological role, participates in both transcription termination and antitermination. The polypeptide is Transcription termination/antitermination protein NusA (Mycoplasma genitalium (strain ATCC 33530 / DSM 19775 / NCTC 10195 / G37) (Mycoplasmoides genitalium)).